The chain runs to 370 residues: 3-isopropylmalate dehydrogenase (370 aa).

Positions 99, 109, 137, and 227 each coordinate substrate. Positions 227, 251, and 255 each coordinate Mg(2+). Residue 290-302 (GSAPDIAGQDKAN) coordinates NAD(+).

It belongs to the isocitrate and isopropylmalate dehydrogenases family. LeuB type 1 subfamily. In terms of assembly, homodimer. Requires Mg(2+) as cofactor. Mn(2+) serves as cofactor.

It localises to the cytoplasm. It carries out the reaction (2R,3S)-3-isopropylmalate + NAD(+) = 4-methyl-2-oxopentanoate + CO2 + NADH. It participates in amino-acid biosynthesis; L-leucine biosynthesis; L-leucine from 3-methyl-2-oxobutanoate: step 3/4. Catalyzes the oxidation of 3-carboxy-2-hydroxy-4-methylpentanoate (3-isopropylmalate) to 3-carboxy-4-methyl-2-oxopentanoate. The product decarboxylates to 4-methyl-2 oxopentanoate. This Rhodospirillum rubrum (strain ATCC 11170 / ATH 1.1.1 / DSM 467 / LMG 4362 / NCIMB 8255 / S1) protein is 3-isopropylmalate dehydrogenase.